Consider the following 439-residue polypeptide: Glucose-1-phosphate adenylyltransferase (439 aa).

Alpha-D-glucose 1-phosphate-binding positions include G172, 187–188, and S219; that span reads EK.

The protein belongs to the bacterial/plant glucose-1-phosphate adenylyltransferase family. Homotetramer.

It carries out the reaction alpha-D-glucose 1-phosphate + ATP + H(+) = ADP-alpha-D-glucose + diphosphate. It participates in glycan biosynthesis; glycogen biosynthesis. Its function is as follows. Involved in the biosynthesis of ADP-glucose, a building block required for the elongation reactions to produce glycogen. Catalyzes the reaction between ATP and alpha-D-glucose 1-phosphate (G1P) to produce pyrophosphate and ADP-Glc. This is Glucose-1-phosphate adenylyltransferase from Synechocystis sp. (strain ATCC 27184 / PCC 6803 / Kazusa).